We begin with the raw amino-acid sequence, 146 residues long: uncharacterized protein (146 aa).

Residues 67–93 (DDNGMESGFCSGATSTGQSASTSPAPV) are disordered. Residues 77–92 (SGATSTGQSASTSPAP) show a composition bias toward low complexity.

This is an uncharacterized protein from Caenorhabditis elegans.